The primary structure comprises 286 residues: ATP synthase gamma chain (286 aa).

It belongs to the ATPase gamma chain family. In terms of assembly, F-type ATPases have 2 components, CF(1) - the catalytic core - and CF(0) - the membrane proton channel. CF(1) has five subunits: alpha(3), beta(3), gamma(1), delta(1), epsilon(1). CF(0) has three main subunits: a, b and c.

Its subcellular location is the cell inner membrane. Its function is as follows. Produces ATP from ADP in the presence of a proton gradient across the membrane. The gamma chain is believed to be important in regulating ATPase activity and the flow of protons through the CF(0) complex. This is ATP synthase gamma chain from Shewanella sp. (strain MR-4).